We begin with the raw amino-acid sequence, 323 residues long: MIEFGDFYRLIAKGPLSPWLDTLPAQLSAWQRESLHGKFKTWFNAVEHLPQLTPTTLDLHSGVRAEMSPPISAGQREGMENMLRALMPWRKGPFSLYGLEIDTEWRSDWKWQRVLPHISPLAGRTILDVGCGSGYHLWRMIGEGAHLAVGIDPMQLFLCQFEAIRKLLGGDQRAHVLPLGIEQLPELAAFDTVFSMGVLYHRRSPLDHLYQLKNQLVTDGELVLETLVVEGDSQQVLVPGDRYAQMRNVYFIPSAPALKAWLEKCGFVDVRIADMAVTTTEEQRRTDWMTSESLAEFLDPHDHSKTVEGYPAPLRAVLIARKP.

Carboxy-S-adenosyl-L-methionine is bound by residues Lys91, Trp105, Lys110, Gly130, 181-182 (IE), Met196, Tyr200, and Arg315.

It belongs to the class I-like SAM-binding methyltransferase superfamily. CmoB family. As to quaternary structure, homotetramer.

It catalyses the reaction carboxy-S-adenosyl-L-methionine + 5-hydroxyuridine(34) in tRNA = 5-carboxymethoxyuridine(34) in tRNA + S-adenosyl-L-homocysteine + H(+). Catalyzes carboxymethyl transfer from carboxy-S-adenosyl-L-methionine (Cx-SAM) to 5-hydroxyuridine (ho5U) to form 5-carboxymethoxyuridine (cmo5U) at position 34 in tRNAs. This Yersinia pseudotuberculosis serotype O:3 (strain YPIII) protein is tRNA U34 carboxymethyltransferase.